The following is a 659-amino-acid chain: DNA mismatch repair protein MutL (659 aa).

Residues 338-459 form a disordered region; that stretch reads GAPRGASKPG…DTTSERDSLP (122 aa). A compositionally biased stretch (basic and acidic residues) spans 352 to 362; the sequence is SPEHSPTDRDA. Polar residues predominate over residues 374 to 391; it reads SDGNGQRTAASGATSESP.

Belongs to the DNA mismatch repair MutL/HexB family.

This protein is involved in the repair of mismatches in DNA. It is required for dam-dependent methyl-directed DNA mismatch repair. May act as a 'molecular matchmaker', a protein that promotes the formation of a stable complex between two or more DNA-binding proteins in an ATP-dependent manner without itself being part of a final effector complex. The chain is DNA mismatch repair protein MutL from Halobacterium salinarum (strain ATCC 29341 / DSM 671 / R1).